The chain runs to 621 residues: UvrABC system protein C (621 aa).

A GIY-YIG domain is found at 20–98 (MAPGVYCMYA…IKSLAPRYNV (79 aa)). A UVR domain is found at 207-242 (DLLAEELIQAMQVASEHLEFEQAARLRDLLTSLRSM).

The protein belongs to the UvrC family. As to quaternary structure, interacts with UvrB in an incision complex.

The protein localises to the cytoplasm. The UvrABC repair system catalyzes the recognition and processing of DNA lesions. UvrC both incises the 5' and 3' sides of the lesion. The N-terminal half is responsible for the 3' incision and the C-terminal half is responsible for the 5' incision. The polypeptide is UvrABC system protein C (Xylella fastidiosa (strain 9a5c)).